A 245-amino-acid chain; its full sequence is Ribosomal RNA small subunit methyltransferase G (245 aa).

S-adenosyl-L-methionine contacts are provided by residues Gly-79, Phe-84, Ala-130 to Glu-131, and Arg-150.

This sequence belongs to the methyltransferase superfamily. RNA methyltransferase RsmG family.

It localises to the cytoplasm. In terms of biological role, specifically methylates the N7 position of a guanine in 16S rRNA. The polypeptide is Ribosomal RNA small subunit methyltransferase G (Limosilactobacillus fermentum (strain NBRC 3956 / LMG 18251) (Lactobacillus fermentum)).